A 513-amino-acid chain; its full sequence is uncharacterized protein (513 aa).

5 helical membrane-spanning segments follow: residues 262–282, 304–324, 341–361, 382–402, and 429–449; these read FAIF…FWQL, YMFL…ITYH, EPIP…FEAL, LVIG…VIIV, and MFLA…ILVL. The disordered stretch occupies residues 489 to 513; the sequence is PGTYSRGNGQKGAKREDPKDEENNI. A compositionally biased stretch (basic and acidic residues) spans 501 to 513; that stretch reads AKREDPKDEENNI.

Belongs to the GerABKA family.

The protein localises to the cell membrane. This is an uncharacterized protein from Bacillus subtilis (strain 168).